The primary structure comprises 1506 residues: Condensin-2 complex subunit D3 (1506 aa).

Positions 154–194 (SNLTQKRKKDHSKSSKDNYRKSRKRGKPPRKEDYQVDELSR) are disordered. 3 HEAT repeats span residues 442 to 476 (HKFF…LELS), 532 to 567 (PGER…LKHC), and 574 to 605 (QDLL…VMAQ). Position 562 is a phosphoserine (serine 562). Positions 884–897 (SDHLPSSQGTTDAL) are enriched in polar residues. A disordered region spans residues 884-908 (SDHLPSSQGTTDALDSQPPFQPRSS). One copy of the HEAT 4 repeat lies at 968–1004 (TVMVDNYIPNISVCLKDSDPFIRKQTLVLLTNLLQEE). The stretch at 1213 to 1270 (ALRELMNYLREVMQDYRDEINDFFAVDKQLASELEYDMKKYNEQLAQEQALTEHANAT) forms a coiled coil. Positions 1317–1353 (QDNADVPPTQSRPSAPRSNFTPTLPPISENGPLKIMS) are disordered. A compositionally biased stretch (polar residues) spans 1324–1338 (PTQSRPSAPRSNFTP). Residues serine 1359, serine 1368, serine 1381, and serine 1393 each carry the phosphoserine modification. Disordered stretches follow at residues 1385 to 1412 (LPFN…ESDR) and 1473 to 1506 (PQSP…KTAN). Positions 1393–1405 (SPENPSSHESSLS) are enriched in low complexity. Positions 1492–1506 (SSRRSLRKAPLKTAN) are enriched in basic residues.

In terms of assembly, component of the condensin-2 complex, which contains the SMC2 and SMC4 heterodimer, and 3 non SMC subunits that probably regulate the complex: NCAPH2, NCAPD3 and NCAPG2.

It is found in the nucleus. In terms of biological role, regulatory subunit of the condensin-2 complex, a complex which establishes mitotic chromosome architecture and is involved in physical rigidity of the chromatid axis. May promote the resolution of double-strand DNA catenanes (intertwines) between sister chromatids. Condensin-mediated compaction likely increases tension in catenated sister chromatids, providing directionality for type II topoisomerase-mediated strand exchanges toward chromatid decatenation. Specifically required for decatenation of centromeric ultrafine DNA bridges during anaphase. Early in neurogenesis, may play an essential role to ensure accurate mitotic chromosome condensation in neuron stem cells, ultimately affecting neuron pool and cortex size. The protein is Condensin-2 complex subunit D3 (Ncapd3) of Mus musculus (Mouse).